Here is a 129-residue protein sequence, read N- to C-terminus: Large ribosomal subunit protein bL12 (129 aa).

This sequence belongs to the bacterial ribosomal protein bL12 family. In terms of assembly, homodimer. Part of the ribosomal stalk of the 50S ribosomal subunit. Forms a multimeric L10(L12)X complex, where L10 forms an elongated spine to which 2 to 4 L12 dimers bind in a sequential fashion. Binds GTP-bound translation factors.

In terms of biological role, forms part of the ribosomal stalk which helps the ribosome interact with GTP-bound translation factors. Is thus essential for accurate translation. This is Large ribosomal subunit protein bL12 from Pseudothermotoga lettingae (strain ATCC BAA-301 / DSM 14385 / NBRC 107922 / TMO) (Thermotoga lettingae).